We begin with the raw amino-acid sequence, 786 residues long: Diamine oxidase [copper-containing] 1, peroxisomal (786 aa).

Position 419-430 (alanine 419–asparagine 430) interacts with substrate. Aspartate 421 acts as the Proton acceptor in catalysis. Residues cysteine 440 and cysteine 466 are joined by a disulfide bond. Substrate is bound at residue valine 502–tyrosine 507. The active-site Schiff-base intermediate with substrate; via topaquinone is the tyrosine 505. 2',4',5'-topaquinone is present on tyrosine 505. The Cu cation site is built by histidine 555 and histidine 557. Residues aspartate 710 and isoleucine 711 each coordinate Mn(2+). Histidine 721 serves as a coordination point for Cu cation.

This sequence belongs to the copper/topaquinone oxidase family. Homodimer. It depends on Cu cation as a cofactor. Zn(2+) serves as cofactor. L-topaquinone is required as a cofactor. Post-translationally, topaquinone (TPQ) is generated by copper-dependent autoxidation of a specific tyrosyl residue. In terms of tissue distribution, mainly expressed in roots, and, to a lower extent, in leaves and stems.

It is found in the peroxisome. The catalysed reaction is a primary methyl amine + O2 + H2O = an aldehyde + H2O2 + NH4(+). It catalyses the reaction N-methylputrescine + O2 + H2O = 4-methylaminobutanal + H2O2 + NH4(+). It functions in the pathway alkaloid biosynthesis; nicotine biosynthesis. The protein operates within amine and polyamine degradation; putrescine degradation. Functionally, involved in putrescine catabolism in peroxisomes. May also be involved in the biosynthesis of pyridine alkaloid natural products, leading mainly to the production of anabasine, anatabine, nicotine and nornicotine, effective deterrents against herbivores with antiparasitic and pesticide properties (neurotoxins); nornicotine serves as the precursor in the synthesis of the carcinogen compound N'-nitrosonornicotine (NNN). Oxidizes preferentially non-N-methylated amines. This Nicotiana tabacum (Common tobacco) protein is Diamine oxidase [copper-containing] 1, peroxisomal.